Here is a 198-residue protein sequence, read N- to C-terminus: 7-methyl-GTP pyrophosphatase (198 aa).

Aspartate 75 serves as the catalytic Proton acceptor.

This sequence belongs to the Maf family. YceF subfamily. It depends on a divalent metal cation as a cofactor.

Its subcellular location is the cytoplasm. The catalysed reaction is N(7)-methyl-GTP + H2O = N(7)-methyl-GMP + diphosphate + H(+). Nucleoside triphosphate pyrophosphatase that hydrolyzes 7-methyl-GTP (m(7)GTP). May have a dual role in cell division arrest and in preventing the incorporation of modified nucleotides into cellular nucleic acids. This is 7-methyl-GTP pyrophosphatase from Bartonella henselae (strain ATCC 49882 / DSM 28221 / CCUG 30454 / Houston 1) (Rochalimaea henselae).